A 312-amino-acid polypeptide reads, in one-letter code: Mycothiol acetyltransferase (312 aa).

2 consecutive N-acetyltransferase domains span residues 8–136 (PIIR…LPMP) and 149–301 (LRLD…HQDH). Residue Glu-38 coordinates 1D-myo-inositol 2-(L-cysteinylamino)-2-deoxy-alpha-D-glucopyranoside. Residues 77–79 (LMV) and 85–90 (RQGIAT) each bind acetyl-CoA. 1D-myo-inositol 2-(L-cysteinylamino)-2-deoxy-alpha-D-glucopyranoside is bound by residues Glu-175, Lys-215, and Glu-226. Residues 230–232 (LGV) and 237–243 (EGKGVGR) each bind acetyl-CoA. Tyr-264 contributes to the 1D-myo-inositol 2-(L-cysteinylamino)-2-deoxy-alpha-D-glucopyranoside binding site. 269-274 (NERVVH) is a binding site for acetyl-CoA. The interval 292–312 (PAKPARHQDHGRQSSPQERDA) is disordered. Over residues 297-312 (RHQDHGRQSSPQERDA) the composition is skewed to basic and acidic residues.

The protein belongs to the acetyltransferase family. MshD subfamily. In terms of assembly, monomer.

The catalysed reaction is 1D-myo-inositol 2-(L-cysteinylamino)-2-deoxy-alpha-D-glucopyranoside + acetyl-CoA = mycothiol + CoA + H(+). Catalyzes the transfer of acetyl from acetyl-CoA to desacetylmycothiol (Cys-GlcN-Ins) to form mycothiol. The chain is Mycothiol acetyltransferase from Propionibacterium freudenreichii subsp. shermanii (strain ATCC 9614 / DSM 4902 / CIP 103027 / NCIMB 8099 / CIRM-BIA1).